The primary structure comprises 90 residues: Small ribosomal subunit protein uS19 (90 aa).

The protein belongs to the universal ribosomal protein uS19 family.

Its function is as follows. Protein S19 forms a complex with S13 that binds strongly to the 16S ribosomal RNA. This Clostridium beijerinckii (strain ATCC 51743 / NCIMB 8052) (Clostridium acetobutylicum) protein is Small ribosomal subunit protein uS19.